The sequence spans 201 residues: Alanine--tRNA ligase (201 aa).

It belongs to the class-II aminoacyl-tRNA synthetase family. The cofactor is Zn(2+).

The protein localises to the cytoplasm. The catalysed reaction is tRNA(Ala) + L-alanine + ATP = L-alanyl-tRNA(Ala) + AMP + diphosphate. Catalyzes the attachment of alanine to tRNA(Ala) in a two-step reaction: alanine is first activated by ATP to form Ala-AMP and then transferred to the acceptor end of tRNA(Ala). Also edits incorrectly charged Ser-tRNA(Ala) and Gly-tRNA(Ala) via its editing domain. The sequence is that of Alanine--tRNA ligase (alaS) from Rhizobium leguminosarum bv. viciae.